The sequence spans 121 residues: Small ribosomal subunit protein uS13 (121 aa).

The segment at 95-121 (LPMRGQRTRTNARTRKGPRKAAASLKK) is disordered.

This sequence belongs to the universal ribosomal protein uS13 family. In terms of assembly, part of the 30S ribosomal subunit. Forms a loose heterodimer with protein S19. Forms two bridges to the 50S subunit in the 70S ribosome.

In terms of biological role, located at the top of the head of the 30S subunit, it contacts several helices of the 16S rRNA. In the 70S ribosome it contacts the 23S rRNA (bridge B1a) and protein L5 of the 50S subunit (bridge B1b), connecting the 2 subunits; these bridges are implicated in subunit movement. Contacts the tRNAs in the A and P-sites. The chain is Small ribosomal subunit protein uS13 from Polaromonas naphthalenivorans (strain CJ2).